The primary structure comprises 332 residues: Glyoxylate reductase (332 aa).

Residues Met-155 to Ile-158 and Thr-236 to Arg-238 each bind NADP(+). Residues Arg-238 and Glu-267 contribute to the active site. His-286 functions as the Proton donor in the catalytic mechanism. His-286–Ala-288 serves as a coordination point for NADP(+).

Belongs to the D-isomer specific 2-hydroxyacid dehydrogenase family. GyaR subfamily. In terms of assembly, homodimer.

It is found in the cytoplasm. It catalyses the reaction glycolate + NAD(+) = glyoxylate + NADH + H(+). In Korarchaeum cryptofilum (strain OPF8), this protein is Glyoxylate reductase.